Consider the following 69-residue polypeptide: Conotoxin Eb6.21 (69 aa).

A signal peptide spans 1–17 (VLIIAVLFLTACQLTTA). The propeptide occupies 18–41 (ETYSRGRQKHRARRSTDKNSKWTR). 3 cysteine pairs are disulfide-bonded: cysteine 43-cysteine 57, cysteine 50-cysteine 61, and cysteine 56-cysteine 68.

This sequence belongs to the conotoxin O1 superfamily. Expressed by the venom duct.

It localises to the secreted. This Conus ebraeus (Hebrew cone) protein is Conotoxin Eb6.21 (E1).